Reading from the N-terminus, the 342-residue chain is Transcription initiation factor TFIID subunit 12 (342 aa).

The interval 1 to 221 (MKMEEFSPPT…QAPPPQMIPA (221 aa)) is disordered. A compositionally biased stretch (polar residues) spans 12–35 (PNNHVIVQANPQIAAALSTNSPMQ). Composition is skewed to low complexity over residues 39 to 59 (PPQGHQNPNEQQQQQQFVGQP), 67 to 89 (PMRMQMPQQQIRQMPYPSPQMRA), 96 to 146 (QQQQ…HLMG), and 180 to 192 (QQIMQVQHQQQHQ). Positions 193-218 (QPPPSQQIQQPPIPQPQQQQAPPPQM) are enriched in pro residues. A Histone-fold domain is found at 230-297 (EKSKLDDLMQ…EFILKNVYNM (68 aa)).

This sequence belongs to the TAF12 family. Interacts (via histone-fold domain) with taf-4 (via the histone-fold domain). Interaction may facilitate the nuclear localization of taf-4.

Its subcellular location is the nucleus. Part of the general transcription factor complex TFIID. Plays a role in recruiting taf-4 to the nucleus and thereby activating transcription initiation by RNA polymerase II, as part of the TFIID complex. The sequence is that of Transcription initiation factor TFIID subunit 12 from Caenorhabditis elegans.